The following is a 1072-amino-acid chain: Integrin alpha-6 (1072 aa).

Positions 1-18 (MAAALLLYLPLLPGLAGA) are cleaved as a signal peptide. Over 19-1010 (FNLDAENVIG…FPAKPVALYT (992 aa)) the chain is Extracellular. FG-GAP repeat units follow at residues 23 to 88 (AENV…DTRC), 94 to 160 (DEDT…IKDD), 170 to 223 (DGRL…FYDL), 238 to 295 (RQDK…QRAL), 296 to 357 (SLEH…KWEG), 358 to 413 (IKPI…GINT), and 414 to 476 (EPAQ…VQPD). Residue asparagine 71 is glycosylated (N-linked (GlcNAc...) asparagine). Disulfide bonds link cysteine 79–cysteine 88, cysteine 125–cysteine 148, and cysteine 169–cysteine 182. N-linked (GlcNAc...) asparagine glycans are attached at residues asparagine 217 and asparagine 278. Positions 318, 320, 322, and 326 each coordinate Ca(2+). An N-linked (GlcNAc...) asparagine glycan is attached at asparagine 364. 10 residues coordinate Ca(2+): aspartate 380, asparagine 382, aspartate 384, tyrosine 386, aspartate 388, aspartate 438, aspartate 440, asparagine 442, tyrosine 444, and aspartate 446. Cysteine 498 and cysteine 557 are disulfide-bonded. Residues asparagine 515 and asparagine 609 are each glycosylated (N-linked (GlcNAc...) asparagine). 2 cysteine pairs are disulfide-bonded: cysteine 625–cysteine 631 and cysteine 725–cysteine 736. Residues asparagine 730, asparagine 747, and asparagine 780 are each glycosylated (N-linked (GlcNAc...) asparagine). Cystine bridges form between cysteine 880–cysteine 927 and cysteine 933–cysteine 938. The N-linked (GlcNAc...) asparagine glycan is linked to asparagine 957. The chain crosses the membrane as a helical span at residues 1011 to 1036 (GVPWWIIAVAIFAGVLMLALLVFLLW). At 1037–1072 (KCGFFKRSKKDHYDATYHKAEIHAQPSDKERLTSDA) the chain is on the cytoplasmic side. A lipid anchor (S-palmitoyl cysteine; by DHHC3) is attached at cysteine 1038. The GFFKR motif signature appears at 1039 to 1043 (GFFKR). Position 1070 is a phosphoserine; by CaMK2 (serine 1070).

Belongs to the integrin alpha chain family. In terms of assembly, heterodimer of an alpha and a beta subunit. The alpha subunit is composed of a heavy and a light chain linked by a disulfide bond. Alpha-6 associates with either beta-1 (ITGB1) or beta-4 (ITGB4) to form ITGA6:ITGB1 and ITGA6:ITGB4, respectively. In terms of processing, phosphorylated in vivo.

Its subcellular location is the cell membrane. In terms of biological role, integrin alpha-6/beta-1 (ITGA6:ITGB1) is a receptor for laminin on platelets. Integrin alpha-6/beta-1 (ITGA6:ITGB1) is present in oocytes and is involved in sperm-egg fusion. Integrin alpha-6/beta-4 (ITGA6:ITGB4) is a receptor for laminin in epithelial cells and it plays a critical structural role in the hemidesmosome. The sequence is that of Integrin alpha-6 (ITGA6) from Gallus gallus (Chicken).